A 231-amino-acid chain; its full sequence is Ureidoacrylate amidohydrolase RutB (231 aa).

Asp25 functions as the Proton acceptor in the catalytic mechanism. Residue Lys134 is part of the active site. The Nucleophile role is filled by Cys167.

Belongs to the isochorismatase family. RutB subfamily.

The enzyme catalyses (Z)-3-ureidoacrylate + H2O + H(+) = (Z)-3-aminoacrylate + NH4(+) + CO2. It catalyses the reaction (Z)-3-ureidoacrylate + H2O = (Z)-3-aminoacrylate + carbamate + H(+). It carries out the reaction (Z)-2-methylureidoacrylate + H2O + H(+) = (Z)-2-methylaminoacrylate + NH4(+) + CO2. Functionally, hydrolyzes ureidoacrylate to form aminoacrylate and carbamate. The carbamate hydrolyzes spontaneously, thereby releasing one of the nitrogen atoms of the pyrimidine ring as ammonia and one of its carbon atoms as CO2. This is Ureidoacrylate amidohydrolase RutB from Escherichia coli (strain SMS-3-5 / SECEC).